A 388-amino-acid polypeptide reads, in one-letter code: STE20-related kinase adapter protein strd-1 (388 aa).

The 284-residue stretch at 52-335 (YDCVRYMGTC…ASDLKSSAWL (284 aa)) folds into the Protein kinase domain. Residues 58 to 66 (MGTCNGGQI) and Lys-82 contribute to the ATP site.

The protein belongs to the protein kinase superfamily. STE Ser/Thr protein kinase family. STE20 subfamily. Interacts with sad-1. Interacts with par-4. In terms of tissue distribution, expressed in nervous system, pharynx and excretory canal. Expressed in germline.

It is found in the perikaryon. It localises to the nucleus. Its subcellular location is the cell projection. The protein resides in the dendrite. The protein localises to the axon. It is found in the synapse. It localises to the cytoplasm. Its subcellular location is the cell cortex. Functionally, pseudokinase which may act as an adapter for kinases sad-1 and par-4 and thereby is involved in several developmental processes. Regulates cell-autonomously both neuronal polarity and synaptic organization when bound to sad-1. Required for sad-1 localization to synapses. Required to establish germline stem cell (GSC) quiescence during dauer development, to promote cell shedding during embryogenesis and to control asymmetric cell division of the Q.p neuroblast lineage, probably when bound to par-4. May be involved in maintaining the integrity of the early embryonic cortex when bound to par-4. This Caenorhabditis elegans protein is STE20-related kinase adapter protein strd-1.